A 302-amino-acid chain; its full sequence is Methionyl-tRNA formyltransferase (302 aa).

108 to 111 serves as a coordination point for (6S)-5,6,7,8-tetrahydrofolate; that stretch reads SLLP. Residues 279–288 show a composition bias toward basic and acidic residues; sequence KRPMEPEEFL. The segment at 279 to 302 is disordered; the sequence is KRPMEPEEFLRGFPLPEGSRAHTS.

Belongs to the Fmt family.

The enzyme catalyses L-methionyl-tRNA(fMet) + (6R)-10-formyltetrahydrofolate = N-formyl-L-methionyl-tRNA(fMet) + (6S)-5,6,7,8-tetrahydrofolate + H(+). Attaches a formyl group to the free amino group of methionyl-tRNA(fMet). The formyl group appears to play a dual role in the initiator identity of N-formylmethionyl-tRNA by promoting its recognition by IF2 and preventing the misappropriation of this tRNA by the elongation apparatus. In Cereibacter sphaeroides (strain ATCC 17023 / DSM 158 / JCM 6121 / CCUG 31486 / LMG 2827 / NBRC 12203 / NCIMB 8253 / ATH 2.4.1.) (Rhodobacter sphaeroides), this protein is Methionyl-tRNA formyltransferase.